Reading from the N-terminus, the 433-residue chain is 3-phosphoshikimate 1-carboxyvinyltransferase (433 aa).

3 residues coordinate 3-phosphoshikimate: Lys22, Ser23, and Arg27. Residue Lys22 participates in phosphoenolpyruvate binding. Positions 95 and 123 each coordinate phosphoenolpyruvate. Positions 167, 169, 315, and 342 each coordinate 3-phosphoshikimate. Gln169 is a binding site for phosphoenolpyruvate. Asp315 acts as the Proton acceptor in catalysis. The phosphoenolpyruvate site is built by Arg346 and Arg387.

It belongs to the EPSP synthase family. As to quaternary structure, monomer.

The protein resides in the cytoplasm. It catalyses the reaction 3-phosphoshikimate + phosphoenolpyruvate = 5-O-(1-carboxyvinyl)-3-phosphoshikimate + phosphate. The protein operates within metabolic intermediate biosynthesis; chorismate biosynthesis; chorismate from D-erythrose 4-phosphate and phosphoenolpyruvate: step 6/7. Its function is as follows. Catalyzes the transfer of the enolpyruvyl moiety of phosphoenolpyruvate (PEP) to the 5-hydroxyl of shikimate-3-phosphate (S3P) to produce enolpyruvyl shikimate-3-phosphate and inorganic phosphate. In Legionella pneumophila (strain Paris), this protein is 3-phosphoshikimate 1-carboxyvinyltransferase.